We begin with the raw amino-acid sequence, 547 residues long: Chaperonin GroEL (547 aa).

ATP is bound by residues 30 to 33 (TLGP), lysine 51, 87 to 91 (DGTTT), glycine 415, 479 to 481 (NAA), and aspartate 495.

It belongs to the chaperonin (HSP60) family. In terms of assembly, forms a cylinder of 14 subunits composed of two heptameric rings stacked back-to-back. Interacts with the co-chaperonin GroES.

It localises to the cytoplasm. It catalyses the reaction ATP + H2O + a folded polypeptide = ADP + phosphate + an unfolded polypeptide.. In terms of biological role, together with its co-chaperonin GroES, plays an essential role in assisting protein folding. The GroEL-GroES system forms a nano-cage that allows encapsulation of the non-native substrate proteins and provides a physical environment optimized to promote and accelerate protein folding. This chain is Chaperonin GroEL, found in Cupriavidus taiwanensis (strain DSM 17343 / BCRC 17206 / CCUG 44338 / CIP 107171 / LMG 19424 / R1) (Ralstonia taiwanensis (strain LMG 19424)).